We begin with the raw amino-acid sequence, 178 residues long: Ribosomal RNA small subunit methyltransferase G (178 aa).

Residues Gly54, Leu59, 105 to 106, and Arg120 each bind S-adenosyl-L-methionine; that span reads LE.

The protein belongs to the methyltransferase superfamily. RNA methyltransferase RsmG family.

The protein resides in the cytoplasm. It carries out the reaction guanosine(527) in 16S rRNA + S-adenosyl-L-methionine = N(7)-methylguanosine(527) in 16S rRNA + S-adenosyl-L-homocysteine. In terms of biological role, specifically methylates the N7 position of guanine in position 527 of 16S rRNA. The polypeptide is Ribosomal RNA small subunit methyltransferase G (Helicobacter pylori (strain HPAG1)).